The following is a 274-amino-acid chain: 2,3,4,5-tetrahydropyridine-2,6-dicarboxylate N-succinyltransferase (274 aa).

R104 and D141 together coordinate substrate.

The protein belongs to the transferase hexapeptide repeat family. As to quaternary structure, homotrimer.

It localises to the cytoplasm. The catalysed reaction is (S)-2,3,4,5-tetrahydrodipicolinate + succinyl-CoA + H2O = (S)-2-succinylamino-6-oxoheptanedioate + CoA. It functions in the pathway amino-acid biosynthesis; L-lysine biosynthesis via DAP pathway; LL-2,6-diaminopimelate from (S)-tetrahydrodipicolinate (succinylase route): step 1/3. The polypeptide is 2,3,4,5-tetrahydropyridine-2,6-dicarboxylate N-succinyltransferase (Shewanella amazonensis (strain ATCC BAA-1098 / SB2B)).